A 137-amino-acid polypeptide reads, in one-letter code: Mediator of RNA polymerase II transcription subunit 21 (137 aa).

The tract at residues 37–56 (PKDTIAPSKADQPPEVDTLP) is disordered. Positions 87 to 130 (GLDNSEQDQLQSIKELEEELNVAEKQRQEAVKEKDEVLVKLDQT) form a coiled coil.

The protein belongs to the Mediator complex subunit 21 family. In terms of assembly, component of the Mediator complex.

Its subcellular location is the nucleus. In terms of biological role, component of the Mediator complex, a coactivator involved in the regulated transcription of nearly all RNA polymerase II-dependent genes. Mediator functions as a bridge to convey information from gene-specific regulatory proteins to the basal RNA polymerase II transcription machinery. Mediator is recruited to promoters by direct interactions with regulatory proteins and serves as a scaffold for the assembly of a functional preinitiation complex with RNA polymerase II and the general transcription factors. This is Mediator of RNA polymerase II transcription subunit 21 (srb-7) from Neurospora crassa (strain ATCC 24698 / 74-OR23-1A / CBS 708.71 / DSM 1257 / FGSC 987).